The chain runs to 508 residues: Adenylosuccinate synthetase 1, chloroplastic (508 aa).

The transit peptide at 1 to 56 directs the protein to the chloroplast; that stretch reads MNISILRLDSNPITTATSPATATANHRSGILGCYNGTYSCRLNQLQQRKKNPSIIV. Residues 95–101 and 123–125 contribute to the GTP site; these read GDEGKGK and GHT. The active-site Proton acceptor is the D96. Mg(2+) is bound by residues D96 and G123. IMP-binding positions include 96–99, 121–124, T213, R227, Q307, T322, and R386; these read DEGK and NAGH. The Proton donor role is filled by H124. Position 382–388 (382–388) interacts with substrate; sequence TTTGRPR. Residues R388, 414–416, and 497–499 each bind GTP; these read KLD and GIG.

Belongs to the adenylosuccinate synthetase family. As to quaternary structure, homodimer. The cofactor is Mg(2+).

The protein resides in the plastid. It localises to the chloroplast. The enzyme catalyses IMP + L-aspartate + GTP = N(6)-(1,2-dicarboxyethyl)-AMP + GDP + phosphate + 2 H(+). Its pathway is purine metabolism; AMP biosynthesis via de novo pathway; AMP from IMP: step 1/2. Plays an important role in the de novo pathway and in the salvage pathway of purine nucleotide biosynthesis. Catalyzes the first committed step in the biosynthesis of AMP from IMP. The protein is Adenylosuccinate synthetase 1, chloroplastic of Capsicum frutescens (Cayenne pepper).